Reading from the N-terminus, the 704-residue chain is MEQGLRSDGNNPPSIDKTRVLDVKPLRCLAPVFPSPNGMSSVSTPQPSPFVCVPPTGPFPPGVAPFYPFVAPNDSGRPGESSQQTPSGVPNQGGPFGFAQPISPVPLNSFRTPTTANGNSGRSRRAVDDDDYSNSQDQNDQFASGFSVHVNNVEDSGTGKKRGRPKKPRRAQQAEGLTPVEVDVEPLLTQLLTSFKLVDLDQVKKADGDKELAGRVLLVFDLFRRRMTQIDESRDGPGSGRRPDLKASNMLMTKGVRTNQTKRIGNAPGIEVGDIFFFRMELCLVGLHAPTMAGIDYMSVKLTMDEEPLAVSIVSSGGYDDDGGDGDVLIYTGQGGVQRKDGQVFDQKLERGNLALEKSVHRANEVRVIRGVKDVAYPTGKIYIYDGLYKIQESWAEKNKVGCNVFKYKLLRVPGQPEAFKVWKSIQQWKDGVASRVGVILPDLTSGAESQPVCLVNDVDDEKGPAYFTYIPSLKYSKPFVMPRPSPSCHCVGGCQPGDSNCACIQSNGGFLPYSSLGVLLSYKTLIHECGSACSCPPNCRNRMSQGGPKARLEVFKTKNRGWGLRSWDPIRGGGFICEYAGEVIDAGNYSDDNYIFDATRIYAPLEAERDYNDESRKVPFPLVISAKNGGNISRFMNHSCSPNVYWQLVVRQSNNEATYHIAFFAIRHIPPMQELTFDYGMDKADHRRKKCLCGSLNCRGYFY.

2 disordered regions span residues 1–21 and 68–176; these read MEQG…TRVL and PFVA…QAEG. Composition is skewed to polar residues over residues 80 to 90 and 109 to 121; these read ESSQQTPSGVP and SFRT…GNSG. The segment covering 159–170 has biased composition (basic residues); that stretch reads GKKRGRPKKPRR. A YDG domain is found at 265–412; sequence GNAPGIEVGD…CNVFKYKLLR (148 aa). In terms of domain architecture, Pre-SET spans 487–548; that stretch reads PSCHCVGGCQ…NCRNRMSQGG (62 aa). Zn(2+)-binding residues include C489, C491, C495, C502, C504, C530, C534, C536, and C540. The SET domain occupies 551 to 681; sequence ARLEVFKTKN…PMQELTFDYG (131 aa). Residues 561-563, D593, Y595, R635, and 638-639 contribute to the S-adenosyl-L-methionine site; these read RGW and NH. Zn(2+) is bound by residues C641, C692, C694, and C699. One can recognise a Post-SET domain in the interval 688–704; it reads RRKKCLCGSLNCRGYFY.

Belongs to the class V-like SAM-binding methyltransferase superfamily. Histone-lysine methyltransferase family. Suvar3-9 subfamily. Interacts with LHP1. In terms of tissue distribution, expressed in roots, stems, leaves and flowers.

Its subcellular location is the nucleus. It localises to the chromosome. The catalysed reaction is N(6)-methyl-L-lysyl(27)-[histone H3] + S-adenosyl-L-methionine = N(6),N(6)-dimethyl-L-lysyl(27)-[histone H3] + S-adenosyl-L-homocysteine + H(+). The enzyme catalyses L-lysyl(9)-[histone H3] + 2 S-adenosyl-L-methionine = N(6),N(6)-dimethyl-L-lysyl(9)-[histone H3] + 2 S-adenosyl-L-homocysteine + 2 H(+). It catalyses the reaction L-lysyl(27)-[histone H3] + S-adenosyl-L-methionine = N(6)-methyl-L-lysyl(27)-[histone H3] + S-adenosyl-L-homocysteine + H(+). Histone methyltransferase. Methylates in vitro both 'Lys-9' and 'Lys-27' of histone H3. Required for in vivo dimethylation of 'Lys-9'. H3 'Lys-9' methylation represents a specific tag for epigenetic control for plant development and transcriptional repression. The chain is Histone-lysine N-methyltransferase, H3 lysine-9 specific SUVH1 (SUVH1) from Nicotiana tabacum (Common tobacco).